The sequence spans 297 residues: Cytidine deaminase (297 aa).

2 CMP/dCMP-type deaminase domains span residues 50-170 (SDKE…FGPK) and 189-297 (ETES…YASL). Residue 91 to 93 (NME) participates in substrate binding. Histidine 104 contacts Zn(2+). The Proton donor role is filled by glutamate 106. Cysteine 131 and cysteine 134 together coordinate Zn(2+).

This sequence belongs to the cytidine and deoxycytidylate deaminase family. Homodimer. Zn(2+) serves as cofactor.

The enzyme catalyses cytidine + H2O + H(+) = uridine + NH4(+). It carries out the reaction 2'-deoxycytidine + H2O + H(+) = 2'-deoxyuridine + NH4(+). Its function is as follows. This enzyme scavenges exogenous and endogenous cytidine and 2'-deoxycytidine for UMP synthesis. This is Cytidine deaminase from Aliivibrio fischeri (strain ATCC 700601 / ES114) (Vibrio fischeri).